Consider the following 354-residue polypeptide: S-adenosylmethionine:tRNA ribosyltransferase-isomerase (354 aa).

It belongs to the QueA family. As to quaternary structure, monomer.

The protein resides in the cytoplasm. The enzyme catalyses 7-aminomethyl-7-carbaguanosine(34) in tRNA + S-adenosyl-L-methionine = epoxyqueuosine(34) in tRNA + adenine + L-methionine + 2 H(+). Its pathway is tRNA modification; tRNA-queuosine biosynthesis. Transfers and isomerizes the ribose moiety from AdoMet to the 7-aminomethyl group of 7-deazaguanine (preQ1-tRNA) to give epoxyqueuosine (oQ-tRNA). In Salmonella typhi, this protein is S-adenosylmethionine:tRNA ribosyltransferase-isomerase.